We begin with the raw amino-acid sequence, 156 residues long: Protein archease-like (156 aa).

Ca(2+) contacts are provided by Asp-25, Asp-155, and Ile-156.

The protein belongs to the archease family.

Component of the tRNA-splicing ligase complex required to facilitate the enzymatic turnover of catalytic subunit RtcB. Plays an important role in a RNA repair and splicing pathway which controls axon regeneration in response to peripheral (PNS) and central nervous system (CNS) injury, by activating splicing of Xbp1 to promote axon regeneration in response to axotomy. The chain is Protein archease-like from Drosophila melanogaster (Fruit fly).